The chain runs to 409 residues: Ubiquitin-associated domain-containing protein 1 (409 aa).

M1 is subject to N-acetylmethionine. In terms of domain architecture, Ubiquitin-like spans 14–98 (LRLHICAADG…LLLIKKRAPS (85 aa)). The 45-residue stretch at 187 to 231 (DEDERVDETALRQLTEMGFPESRASKALRLNHMSVPQAMEWLIEH) folds into the UBA 1 domain. Residues 235-273 (PAIDTPLPGHAAQAEASAAAATSSSSSEAAVGTSVEDEE) are disordered. The span at 245–264 (AAQAEASAAAATSSSSSEAA) shows a compositional bias: low complexity. In terms of domain architecture, UBA 2 spans 292–332 (RADARAVISLMEMGFDEKEVIDALRVNNNQQNAACEWLLGD). Positions 357–396 (NPVVQLGLTNPKTLLAFEDMLENPLNSTQWMNDPETGPVM) constitute an STI1 domain.

Component of the KPC complex composed of RNF123/KPC1 and UBAC1/KPC2. Interacts (via ubiquitin-like domain) with RNF123. Interacts (via ubiquitin-like and UBA domains) with the proteasome via its N-terminal domain.

It localises to the cytoplasm. Its pathway is protein modification; protein ubiquitination. Functionally, non-catalytic component of the KPC complex, a E3 ubiquitin-protein ligase complex that mediates polyubiquitination of target proteins, such as CDKN1B and NFKB1. The KPC complex catalyzes polyubiquitination and proteasome-mediated degradation of CDKN1B during G1 phase of the cell cycle. The KPC complex also acts as a key regulator of the NF-kappa-B signaling by promoting maturation of the NFKB1 component of NF-kappa-B by catalyzing ubiquitination of the NFKB1 p105 precursor. Within the KPC complex, UBAC1 acts as an adapter that promotes the transfer of target proteins that have been polyubiquitinated by RNF123/KPC1 to the 26S proteasome. The sequence is that of Ubiquitin-associated domain-containing protein 1 (Ubac1) from Rattus norvegicus (Rat).